The primary structure comprises 287 residues: ATP synthase gamma chain (287 aa).

Belongs to the ATPase gamma chain family. In terms of assembly, F-type ATPases have 2 components, CF(1) - the catalytic core - and CF(0) - the membrane proton channel. CF(1) has five subunits: alpha(3), beta(3), gamma(1), delta(1), epsilon(1). CF(0) has three main subunits: a, b and c.

The protein localises to the cell membrane. In terms of biological role, produces ATP from ADP in the presence of a proton gradient across the membrane. The gamma chain is believed to be important in regulating ATPase activity and the flow of protons through the CF(0) complex. This is ATP synthase gamma chain from Bacillus caldotenax.